A 180-amino-acid chain; its full sequence is Large ribosomal subunit protein uL5 (180 aa).

It belongs to the universal ribosomal protein uL5 family. Part of the 50S ribosomal subunit; part of the 5S rRNA/L5/L18/L25 subcomplex. Contacts the 5S rRNA and the P site tRNA. Forms a bridge to the 30S subunit in the 70S ribosome.

Its function is as follows. This is one of the proteins that bind and probably mediate the attachment of the 5S RNA into the large ribosomal subunit, where it forms part of the central protuberance. In the 70S ribosome it contacts protein S13 of the 30S subunit (bridge B1b), connecting the 2 subunits; this bridge is implicated in subunit movement. Contacts the P site tRNA; the 5S rRNA and some of its associated proteins might help stabilize positioning of ribosome-bound tRNAs. This chain is Large ribosomal subunit protein uL5, found in Solibacter usitatus (strain Ellin6076).